The following is a 228-amino-acid chain: CD9 antigen (228 aa).

The Cytoplasmic portion of the chain corresponds to Pro-2–Tyr-12. Cys-9 is lipidated: S-palmitoyl cysteine. The helical transmembrane segment at Leu-13 to Leu-33 threads the bilayer. The Extracellular portion of the chain corresponds to Trp-34–Ser-55. Asn-52 and Asn-53 each carry an N-linked (GlcNAc...) asparagine glycan. The chain crosses the membrane as a helical span at residues Phe-56–Leu-76. Topologically, residues Gly-77–Cys-87 are cytoplasmic. S-palmitoyl cysteine attachment occurs at residues Cys-78, Cys-79, and Cys-87. Residues Met-88–Tyr-111 traverse the membrane as a helical segment. At Ser-112–Ile-195 the chain is on the extracellular side. 2 cysteine pairs are disulfide-bonded: Cys-152–Cys-181 and Cys-153–Cys-167. Residues Ile-196–Ile-221 traverse the membrane as a helical segment. 2 S-palmitoyl cysteine lipidation sites follow: Cys-218 and Cys-219. The Cytoplasmic segment spans residues Arg-222–Val-228.

Belongs to the tetraspanin (TM4SF) family. As to quaternary structure, forms both disulfide-linked homodimers and higher homooligomers as well as heterooligomers with other members of the tetraspanin family. Interacts (via the second extracellular domain) with integrin ITGAV:ITGB3. Interacts with integrin ITGA6:ITGB1; interaction takes place in oocytes and is involved in sperm-egg fusion. Part of integrin-tetraspanin complexes composed of CD81, beta-1 and beta-2 integrins in the membrane of monocyte/macrophages. Interacts with CD63; identified in a complex with CD63 and ITGB3. Associates with CR2/CD21 and with PTGFRN/CD9P1. Part of a complex composed of CD9, CD81, PTGFRN and IGSF8. Interacts directly with IGSF8. Interacts with PDPN; this interaction is homophilic and attenuates platelet aggregation and pulmonary metastasis induced by PDPN. Interacts (on T cell side) with CD81 at immunological synapses between antigen-presenting cells and T cells. Post-translationally, palmitoylated at a low, basal level in unstimulated platelets. The level of palmitoylation increases when platelets are activated by thrombin (in vitro). The protein exists in three forms with molecular masses between 22 and 27 kDa, and is known to carry covalently linked fatty acids. Palmitoylation by ZDHHC2 regulates CD9 expression, association with other tetraspanin family proteins and function in cell adhesion. As to expression, detected in platelets (at protein level). Expressed by a variety of hematopoietic and epithelial cells.

Its subcellular location is the cell membrane. It localises to the membrane. It is found in the secreted. The protein resides in the extracellular exosome. In terms of biological role, integral membrane protein associated with integrins, which regulates different processes, such as sperm-egg fusion, platelet activation and aggregation, and cell adhesion. Present at the cell surface of oocytes and plays a key role in sperm-egg fusion, possibly by organizing multiprotein complexes and the morphology of the membrane required for the fusion. In myoblasts, associates with CD81 and PTGFRN and inhibits myotube fusion during muscle regeneration. In macrophages, associates with CD81 and beta-1 and beta-2 integrins, and prevents macrophage fusion into multinucleated giant cells specialized in ingesting complement-opsonized large particles. Also prevents the fusion between mononuclear cell progenitors into osteoclasts in charge of bone resorption. Acts as a receptor for PSG17. Involved in platelet activation and aggregation. Regulates paranodal junction formation. Involved in cell adhesion, cell motility and tumor metastasis. In Homo sapiens (Human), this protein is CD9 antigen.